The chain runs to 222 residues: Urease accessory protein UreF (222 aa).

Belongs to the UreF family. In terms of assembly, ureD, UreF and UreG form a complex that acts as a GTP-hydrolysis-dependent molecular chaperone, activating the urease apoprotein by helping to assemble the nickel containing metallocenter of UreC. The UreE protein probably delivers the nickel.

It localises to the cytoplasm. Its function is as follows. Required for maturation of urease via the functional incorporation of the urease nickel metallocenter. This Roseobacter denitrificans (strain ATCC 33942 / OCh 114) (Erythrobacter sp. (strain OCh 114)) protein is Urease accessory protein UreF.